Reading from the N-terminus, the 1404-residue chain is DNA-directed RNA polymerase subunit beta' (1404 aa).

Positions 70, 72, 85, and 88 each coordinate Zn(2+). Asp-460, Asp-462, and Asp-464 together coordinate Mg(2+). Residues Cys-814, Cys-888, Cys-895, and Cys-898 each coordinate Zn(2+).

It belongs to the RNA polymerase beta' chain family. The RNAP catalytic core consists of 2 alpha, 1 beta, 1 beta' and 1 omega subunit. When a sigma factor is associated with the core the holoenzyme is formed, which can initiate transcription. The cofactor is Mg(2+). Zn(2+) is required as a cofactor.

It carries out the reaction RNA(n) + a ribonucleoside 5'-triphosphate = RNA(n+1) + diphosphate. Functionally, DNA-dependent RNA polymerase catalyzes the transcription of DNA into RNA using the four ribonucleoside triphosphates as substrates. The protein is DNA-directed RNA polymerase subunit beta' of Shewanella piezotolerans (strain WP3 / JCM 13877).